A 109-amino-acid polypeptide reads, in one-letter code: Putative double-stranded DNA mimic protein YciU (109 aa).

This sequence belongs to the putative dsDNA mimic protein family.

In terms of biological role, may act as a double-stranded DNA (dsDNA) mimic. Probably regulates the activity of a dsDNA-binding protein. The polypeptide is Putative double-stranded DNA mimic protein YciU (Salmonella arizonae (strain ATCC BAA-731 / CDC346-86 / RSK2980)).